The primary structure comprises 463 residues: MGKKQHIAIFTTASLPWLTGTAVNPLFRAAYLSKDGERDVTLVIPWLSLKDQALVYPNNITFASPSEHEKYIRQWLEERVGFTSGFSIKFYPGKFSRDKRSILAVGDISEVIPDKEADIAVLEEPEHLTWFHHGKRWKTKFRLVIGIIHTNYLEYVKREKNGQMQAFLLKYLNNWVVGIYCHKVIRLSAATQDYSGSIVCNVHGVNPKFLEIGKKKREQQQNGDQAFTKGAYFIGKMVWSKGYKELLHLFKNHQKELSALEVDLFGSGEDSDEVQKAAKKLEMAVRVHPARDHADALFHDYKLFLNPSTTDVVCTTTAEALAMGKIVVCANHCSNEFFKQFPNCWTFDESKGFVQLILKALAEEPAQLTDAQRHDLSWEAATERFLKAAELDKPFEKKLSRSTSIYMSTSLNLQQTVDDASAYVHHVASGFEISRRMFGAIPGSLKPDEELSKELGLSDSGRK.

The signal sequence occupies residues 1 to 22 (MGKKQHIAIFTTASLPWLTGTA).

This sequence belongs to the glycosyltransferase group 1 family. Glycosyltransferase 4 subfamily. In terms of tissue distribution, high expression in nodules infected cells, and low in nodule and root vascular tissue.

Its subcellular location is the plastid. It is found in the chloroplast outer membrane. The protein resides in the plastid outer membrane. It catalyses the reaction a 1,2-diacyl-3-O-(beta-D-galactosyl)-sn-glycerol + UDP-alpha-D-galactose = a 1,2-diacyl-3-O-[alpha-D-galactosyl-(1-&gt;6)-beta-D-galactosyl]-sn-glycerol + UDP + H(+). Involved in the synthesis of diacylglycerol galactolipids that are specifically found in thylakoid and in nodule peribacteroid membranes. Specific for alpha-glycosidic linkages. This Lotus japonicus (Lotus corniculatus var. japonicus) protein is Digalactosyldiacylglycerol synthase 2, chloroplastic.